A 230-amino-acid polypeptide reads, in one-letter code: Protein RESPONSE TO ABA AND SALT 1 (230 aa).

A DOG1 domain is found at 7–230 (SQSFTIFVDG…RLRDRDQERA (224 aa)).

Negative regulator of salt (NaCl) tolerance probably by enhancing abscisic acid (ABA) sensitivity. This Arabidopsis thaliana (Mouse-ear cress) protein is Protein RESPONSE TO ABA AND SALT 1.